The primary structure comprises 266 residues: GATA zinc finger domain-containing protein 1 (266 aa).

The GATA-type zinc finger occupies 9 to 33 (CSMCKTTSSSMWKKSPQGEILCHHC). Residues 59–72 (TTTFATTSAGPSQS) are compositionally biased toward low complexity. A disordered region spans residues 59 to 112 (TTTFATTSAGPSQSNGGGGGKQSKQEIHRRSARLRNTKYKSAPAAEKKVSTKGK). Lysine 259 is covalently cross-linked (Glycyl lysine isopeptide (Lys-Gly) (interchain with G-Cter in SUMO2)).

Component of a chromatin complex, at least composed of KDM5A, GATAD1 and EMSY. Expressed in the eye (lens, ciliary body, retina, sclera and conjunctiva) at postnatal day 2 and 10. Not detected anywhere at postnatal day 14.

The protein resides in the nucleus. Functionally, component of some chromatin complex recruited to chromatin sites methylated 'Lys-4' of histone H3 (H3K4me), with a preference for trimethylated form (H3K4me3). In Mus musculus (Mouse), this protein is GATA zinc finger domain-containing protein 1 (Gatad1).